The chain runs to 81 residues: Photosystem I iron-sulfur center (81 aa).

4Fe-4S ferredoxin-type domains lie at 1–31 (MSHKVKIYDTCIGCTQCVRACPLDVLEMVPW) and 39–68 (IASSPRTEDCVGCKRCETACPTDFLSIRVY). [4Fe-4S] cluster contacts are provided by Cys11, Cys14, Cys17, Cys21, Cys48, Cys51, Cys54, and Cys58.

The cyanobacterial PSI reaction center is composed of one copy each of PsaA,B,C,D,E,F,I,J,K,L,M and X, and forms trimeric complexes. Requires [4Fe-4S] cluster as cofactor.

It is found in the cellular thylakoid membrane. It catalyses the reaction reduced [plastocyanin] + hnu + oxidized [2Fe-2S]-[ferredoxin] = oxidized [plastocyanin] + reduced [2Fe-2S]-[ferredoxin]. In terms of biological role, apoprotein for the two 4Fe-4S centers FA and FB of photosystem I (PSI); essential for photochemical activity. FB is the terminal electron acceptor of PSI, donating electrons to ferredoxin. The C-terminus interacts with PsaA/B/D and helps assemble the protein into the PSI complex. Required for binding of PsaD and PsaE to PSI. PSI is a plastocyanin/cytochrome c6-ferredoxin oxidoreductase, converting photonic excitation into a charge separation, which transfers an electron from the donor P700 chlorophyll pair to the spectroscopically characterized acceptors A0, A1, FX, FA and FB in turn. In Crocosphaera subtropica (strain ATCC 51142 / BH68) (Cyanothece sp. (strain ATCC 51142)), this protein is Photosystem I iron-sulfur center.